The primary structure comprises 332 residues: Anthranilate phosphoribosyltransferase (332 aa).

5-phospho-alpha-D-ribose 1-diphosphate-binding positions include Gly79, 82-83, Ser87, 89-92, 107-115, and Ser119; these read GD, NIST, and KHGNRSVSS. Residue Gly79 coordinates anthranilate. A Mg(2+)-binding site is contributed by Ser91. Residue Asn110 participates in anthranilate binding. Arg165 lines the anthranilate pocket. Residues Asp223 and Glu224 each contribute to the Mg(2+) site.

It belongs to the anthranilate phosphoribosyltransferase family. Homodimer. The cofactor is Mg(2+).

The enzyme catalyses N-(5-phospho-beta-D-ribosyl)anthranilate + diphosphate = 5-phospho-alpha-D-ribose 1-diphosphate + anthranilate. It functions in the pathway amino-acid biosynthesis; L-tryptophan biosynthesis; L-tryptophan from chorismate: step 2/5. Functionally, catalyzes the transfer of the phosphoribosyl group of 5-phosphorylribose-1-pyrophosphate (PRPP) to anthranilate to yield N-(5'-phosphoribosyl)-anthranilate (PRA). The chain is Anthranilate phosphoribosyltransferase from Serratia proteamaculans (strain 568).